A 270-amino-acid chain; its full sequence is Acetylglutamate kinase (270 aa).

Substrate contacts are provided by residues 41–42, Arg-63, and Asn-166; that span reads GG.

This sequence belongs to the acetylglutamate kinase family. ArgB subfamily.

It localises to the cytoplasm. It carries out the reaction N-acetyl-L-glutamate + ATP = N-acetyl-L-glutamyl 5-phosphate + ADP. Its pathway is amino-acid biosynthesis; L-arginine biosynthesis; N(2)-acetyl-L-ornithine from L-glutamate: step 2/4. In terms of biological role, catalyzes the ATP-dependent phosphorylation of N-acetyl-L-glutamate. In Anaeromyxobacter dehalogenans (strain 2CP-C), this protein is Acetylglutamate kinase.